Here is a 1119-residue protein sequence, read N- to C-terminus: Isoleucine--tRNA ligase (1119 aa).

A disordered region spans residues 1–43 (MVPRRSRQRPASSCRTAKTARREMPYPLPAPDGQEPEAQPVTP). The 'HIGH' region signature appears at 84–94 (PFANGLPHYGH). The 'KMSKS' region motif lies at 676-680 (KVSKS). Position 679 (Lys-679) interacts with ATP.

The protein belongs to the class-I aminoacyl-tRNA synthetase family. IleS type 2 subfamily. In terms of assembly, monomer. Requires Zn(2+) as cofactor.

It localises to the cytoplasm. It catalyses the reaction tRNA(Ile) + L-isoleucine + ATP = L-isoleucyl-tRNA(Ile) + AMP + diphosphate. Catalyzes the attachment of isoleucine to tRNA(Ile). As IleRS can inadvertently accommodate and process structurally similar amino acids such as valine, to avoid such errors it has two additional distinct tRNA(Ile)-dependent editing activities. One activity is designated as 'pretransfer' editing and involves the hydrolysis of activated Val-AMP. The other activity is designated 'posttransfer' editing and involves deacylation of mischarged Val-tRNA(Ile). The protein is Isoleucine--tRNA ligase of Leifsonia xyli subsp. xyli (strain CTCB07).